The chain runs to 256 residues: Acetyl-coenzyme A carboxylase carboxyl transferase subunit alpha (256 aa).

The CoA carboxyltransferase C-terminal domain occupies 1–236; sequence MSDVARILKE…KTAIVDELAE (236 aa).

This sequence belongs to the AccA family. Acetyl-CoA carboxylase is a heterohexamer composed of biotin carboxyl carrier protein (AccB), biotin carboxylase (AccC) and two subunits each of ACCase subunit alpha (AccA) and ACCase subunit beta (AccD).

Its subcellular location is the cytoplasm. It catalyses the reaction N(6)-carboxybiotinyl-L-lysyl-[protein] + acetyl-CoA = N(6)-biotinyl-L-lysyl-[protein] + malonyl-CoA. The protein operates within lipid metabolism; malonyl-CoA biosynthesis; malonyl-CoA from acetyl-CoA: step 1/1. Functionally, component of the acetyl coenzyme A carboxylase (ACC) complex. First, biotin carboxylase catalyzes the carboxylation of biotin on its carrier protein (BCCP) and then the CO(2) group is transferred by the carboxyltransferase to acetyl-CoA to form malonyl-CoA. This chain is Acetyl-coenzyme A carboxylase carboxyl transferase subunit alpha, found in Streptococcus thermophilus (strain ATCC BAA-491 / LMD-9).